A 341-amino-acid polypeptide reads, in one-letter code: Cell division protein FtsX (341 aa).

The segment at Met-1–Pro-34 is disordered. The Cytoplasmic segment spans residues Met-1–Ser-65. Residues Phe-66 to Leu-86 traverse the membrane as a helical segment. The Periplasmic portion of the chain corresponds to Lys-87 to Arg-212. A helical transmembrane segment spans residues Phe-213–Ile-233. The Cytoplasmic segment spans residues Arg-234–Tyr-263. Residues Met-264–Leu-284 traverse the membrane as a helical segment. At Asn-285–Asp-311 the chain is on the periplasmic side. A helical transmembrane segment spans residues Gly-312–Ala-332. Over Arg-333–Arg-341 the chain is Cytoplasmic.

This sequence belongs to the ABC-4 integral membrane protein family. FtsX subfamily. Forms a membrane-associated complex with FtsE.

The protein localises to the cell inner membrane. In terms of biological role, part of the ABC transporter FtsEX involved in cellular division. The polypeptide is Cell division protein FtsX (Pseudomonas putida (Arthrobacter siderocapsulatus)).